Here is a 252-residue protein sequence, read N- to C-terminus: Flap endonuclease Xni (252 aa).

Residue D105 participates in Mg(2+) binding. A 5'-3' exonuclease domain is found at 162–250; sequence ERTQFIDYLA…LNANLSQFRL (89 aa). Positions 172, 173, 181, 183, and 186 each coordinate K(+). The tract at residues 185–190 is interaction with DNA; it reads GIGPKS.

The protein belongs to the Xni family. Mg(2+) is required as a cofactor. The cofactor is K(+).

In terms of biological role, has flap endonuclease activity. During DNA replication, flap endonucleases cleave the 5'-overhanging flap structure that is generated by displacement synthesis when DNA polymerase encounters the 5'-end of a downstream Okazaki fragment. In Shewanella woodyi (strain ATCC 51908 / MS32), this protein is Flap endonuclease Xni.